We begin with the raw amino-acid sequence, 92 residues long: Ribonuclease P protein component 1 (92 aa).

Belongs to the eukaryotic/archaeal RNase P protein component 1 family. Consists of a catalytic RNA component and at least 4-5 protein subunits.

It is found in the cytoplasm. The catalysed reaction is Endonucleolytic cleavage of RNA, removing 5'-extranucleotides from tRNA precursor.. Functionally, part of ribonuclease P, a protein complex that generates mature tRNA molecules by cleaving their 5'-ends. This chain is Ribonuclease P protein component 1, found in Staphylothermus marinus (strain ATCC 43588 / DSM 3639 / JCM 9404 / F1).